Here is a 309-residue protein sequence, read N- to C-terminus: Ribonuclease Z (309 aa).

Zn(2+) contacts are provided by histidine 63, histidine 65, aspartate 67, histidine 68, histidine 145, aspartate 216, and histidine 274. Aspartate 67 acts as the Proton acceptor in catalysis.

Belongs to the RNase Z family. In terms of assembly, homodimer. Zn(2+) serves as cofactor.

It catalyses the reaction Endonucleolytic cleavage of RNA, removing extra 3' nucleotides from tRNA precursor, generating 3' termini of tRNAs. A 3'-hydroxy group is left at the tRNA terminus and a 5'-phosphoryl group is left at the trailer molecule.. Its function is as follows. Zinc phosphodiesterase, which displays some tRNA 3'-processing endonuclease activity. Probably involved in tRNA maturation, by removing a 3'-trailer from precursor tRNA. The sequence is that of Ribonuclease Z from Streptococcus pyogenes serotype M1.